Consider the following 886-residue polypeptide: Isoleucine--tRNA ligase (886 aa).

Positions 60 to 70 match the 'HIGH' region motif; it reads PYANGDIHIGH. Glutamate 546 serves as a coordination point for L-isoleucyl-5'-AMP. A 'KMSKS' region motif is present at residues 587–591; the sequence is KMSKS. Lysine 590 lines the ATP pocket. 4 residues coordinate Zn(2+): cysteine 856, cysteine 859, cysteine 870, and cysteine 873.

The protein belongs to the class-I aminoacyl-tRNA synthetase family. IleS type 1 subfamily. As to quaternary structure, monomer. It depends on Zn(2+) as a cofactor.

Its subcellular location is the cytoplasm. The catalysed reaction is tRNA(Ile) + L-isoleucine + ATP = L-isoleucyl-tRNA(Ile) + AMP + diphosphate. Catalyzes the attachment of isoleucine to tRNA(Ile). As IleRS can inadvertently accommodate and process structurally similar amino acids such as valine, to avoid such errors it has two additional distinct tRNA(Ile)-dependent editing activities. One activity is designated as 'pretransfer' editing and involves the hydrolysis of activated Val-AMP. The other activity is designated 'posttransfer' editing and involves deacylation of mischarged Val-tRNA(Ile). This chain is Isoleucine--tRNA ligase, found in Mesomycoplasma hyopneumoniae (strain J / ATCC 25934 / NCTC 10110) (Mycoplasma hyopneumoniae).